The sequence spans 156 residues: ATP synthase subunit b 1 (156 aa).

The helical transmembrane segment at 5 to 27 (FTLISQAMAFAIFIWFTVRFVWP) threads the bilayer.

The protein belongs to the ATPase B chain family. F-type ATPases have 2 components, F(1) - the catalytic core - and F(0) - the membrane proton channel. F(1) has five subunits: alpha(3), beta(3), gamma(1), delta(1), epsilon(1). F(0) has three main subunits: a(1), b(2) and c(10-14). The alpha and beta chains form an alternating ring which encloses part of the gamma chain. F(1) is attached to F(0) by a central stalk formed by the gamma and epsilon chains, while a peripheral stalk is formed by the delta and b chains.

It is found in the cell inner membrane. Functionally, f(1)F(0) ATP synthase produces ATP from ADP in the presence of a proton or sodium gradient. F-type ATPases consist of two structural domains, F(1) containing the extramembraneous catalytic core and F(0) containing the membrane proton channel, linked together by a central stalk and a peripheral stalk. During catalysis, ATP synthesis in the catalytic domain of F(1) is coupled via a rotary mechanism of the central stalk subunits to proton translocation. Component of the F(0) channel, it forms part of the peripheral stalk, linking F(1) to F(0). This chain is ATP synthase subunit b 1, found in Nitrosospira multiformis (strain ATCC 25196 / NCIMB 11849 / C 71).